Consider the following 359-residue polypeptide: GalNAc-alpha-(1-&gt;4)-GalNAc-alpha-(1-&gt;3)-diNAcBac-PP-undecaprenol alpha-1,4-N-acetyl-D-galactosaminyltransferase (359 aa).

E17 is a binding site for substrate. Y45 provides a ligand contact to UDP-N-acetyl-alpha-D-galactosamine. 71–74 (RFKK) provides a ligand contact to substrate. Residues H117, R190, K195, V246, and 266–274 (EGLPTVLIE) contribute to the UDP-N-acetyl-alpha-D-galactosamine site. R190 is a binding site for substrate.

Belongs to the glycosyltransferase group 1 family.

Its subcellular location is the cell inner membrane. It carries out the reaction N-acetyl-alpha-D-galactosaminyl-(1-&gt;4)-N-acetyl-alpha-D-galactosaminyl-(1-&gt;3)-N,N'-diacetyl-alpha-D-bacillosaminyl-tri-trans,heptacis-undecaprenyl diphosphate + 3 UDP-N-acetyl-alpha-D-galactosamine = [alpha-D-GalNAc-(1-&gt;4)]4-alpha-D-GalNAc-(1-&gt;3)-alpha-D-diNAcBac-tri-trans,hepta-cis-undecaprenyl diphosphate + 3 UDP + 3 H(+). It participates in protein modification; protein glycosylation. Its function is as follows. Processive glycosyltransferase that is part of the biosynthetic pathway of the lipid-linked oligosaccharide (LLO) that serves as the glycan donor in bacterial protein N-glycosylation. Catalyzes the transfer of exactly three alpha-(1-&gt;4)-N-acetylgalactosamine (GalNAc) units to the growing LLO precursor, GalNAc-alpha-(1-&gt;4)-GalNAc-alpha-(1-&gt;3)-diNAcBac-PP-undecaprenyl. Cannot accept UDP-GlcNAc as substrate. This Campylobacter jejuni subsp. jejuni serotype O:2 (strain ATCC 700819 / NCTC 11168) protein is GalNAc-alpha-(1-&gt;4)-GalNAc-alpha-(1-&gt;3)-diNAcBac-PP-undecaprenol alpha-1,4-N-acetyl-D-galactosaminyltransferase.